A 309-amino-acid chain; its full sequence is Large ribosomal subunit protein uL22m (309 aa).

The N-terminal 25 residues, 1-25 (MNFHTARISQVGVISRALLSSVSRR), are a transit peptide targeting the mitochondrion. The interval 40 to 63 (SLFGSITENKPKEGKNRGDEDAGS) is disordered. The segment covering 48–59 (NKPKEGKNRGDE) has biased composition (basic and acidic residues).

It belongs to the universal ribosomal protein uL22 family. As to quaternary structure, component of the mitochondrial large ribosomal subunit (mt-LSU). Mature yeast 74S mitochondrial ribosomes consist of a small (37S) and a large (54S) subunit. The 37S small subunit contains a 15S ribosomal RNA (15S mt-rRNA) and 34 different proteins. The 54S large subunit contains a 21S rRNA (21S mt-rRNA) and 46 different proteins. uL22m forms the wall of the exit tunnel.

It is found in the mitochondrion. Functionally, component of the mitochondrial ribosome (mitoribosome), a dedicated translation machinery responsible for the synthesis of mitochondrial genome-encoded proteins, including at least some of the essential transmembrane subunits of the mitochondrial respiratory chain. The mitoribosomes are attached to the mitochondrial inner membrane and translation products are cotranslationally integrated into the membrane. The protein is Large ribosomal subunit protein uL22m (MRPL22) of Saccharomyces cerevisiae (strain ATCC 204508 / S288c) (Baker's yeast).